Consider the following 478-residue polypeptide: Phosphomannomutase (478 aa).

The chain crosses the membrane as a helical span at residues 30–46 (FTPEVCARFTISFLTVM). Residue serine 111 is the Phosphoserine intermediate of the active site. Mg(2+)-binding residues include serine 111, aspartate 245, aspartate 247, and aspartate 249. Residues 265 to 284 (ILGLLCSLELAADAVAIPVS) form a helical membrane-spanning segment.

The protein belongs to the phosphohexose mutase family. The cofactor is Mg(2+).

It is found in the cell membrane. It carries out the reaction alpha-D-mannose 1-phosphate = D-mannose 6-phosphate. The protein operates within nucleotide-sugar biosynthesis; GDP-alpha-D-mannose biosynthesis; alpha-D-mannose 1-phosphate from D-fructose 6-phosphate: step 2/2. Its pathway is bacterial outer membrane biogenesis; LPS O-antigen biosynthesis. Involved in GDP-mannose biosynthesis which serves as the activated sugar nucleotide precursor for mannose residues in cell surface polysaccharides. This enzyme participates in synthesis of the LPS group C2 O antigen. This chain is Phosphomannomutase (manB), found in Salmonella muenchen.